The following is a 200-amino-acid chain: MSEALKVLGEHIANAQDAAVTGWSIANGELTVEIHRDRIETVLTWLRDDPACRFTTLIDICGVDYPQRAERFEVVYHLLSMHQNHRIRVKLSTDEEAPVPTVIPVYPVADWFEREAFDMYGIVFADHPDLRRLLTDYGFEGYPLRKDFPLTGYVEVRWDEEEKRVVYEPVELVQEYRDFDFMSPWEGAKYILPGDEKAEG.

This sequence belongs to the complex I 30 kDa subunit family. As to quaternary structure, NDH-1 is composed of 14 different subunits. Subunits NuoB, C, D, E, F, and G constitute the peripheral sector of the complex.

It is found in the cell inner membrane. The catalysed reaction is a quinone + NADH + 5 H(+)(in) = a quinol + NAD(+) + 4 H(+)(out). In terms of biological role, NDH-1 shuttles electrons from NADH, via FMN and iron-sulfur (Fe-S) centers, to quinones in the respiratory chain. The immediate electron acceptor for the enzyme in this species is believed to be ubiquinone. Couples the redox reaction to proton translocation (for every two electrons transferred, four hydrogen ions are translocated across the cytoplasmic membrane), and thus conserves the redox energy in a proton gradient. This Maricaulis maris (strain MCS10) (Caulobacter maris) protein is NADH-quinone oxidoreductase subunit C.